The primary structure comprises 96 residues: Invertase 7 (96 aa).

Residues 1–19 (MLLQAFIFLLAGFAAKISA) form the signal peptide. N-linked (GlcNAc...) asparagine glycosylation is present at N23. Residues 39 to 42 (WMND) and Q60 each bind substrate. D42 is a catalytic residue. Residues N64 and N76 are each glycosylated (N-linked (GlcNAc...) asparagine).

The protein belongs to the glycosyl hydrolase 32 family.

It catalyses the reaction Hydrolysis of terminal non-reducing beta-D-fructofuranoside residues in beta-D-fructofuranosides.. This chain is Invertase 7 (SUC7), found in Saccharomyces cerevisiae (Baker's yeast).